A 291-amino-acid polypeptide reads, in one-letter code: N-acetylmannosamine kinase (291 aa).

Residues 5–12 (AIDIGGTK) and 132–139 (GVGGGVVS) contribute to the ATP site. The Zn(2+) site is built by His-156, Cys-166, Cys-168, and Cys-173.

It belongs to the ROK (NagC/XylR) family. NanK subfamily. Homodimer.

The catalysed reaction is an N-acyl-D-mannosamine + ATP = an N-acyl-D-mannosamine 6-phosphate + ADP + H(+). It functions in the pathway amino-sugar metabolism; N-acetylneuraminate degradation; D-fructose 6-phosphate from N-acetylneuraminate: step 2/5. In terms of biological role, catalyzes the phosphorylation of N-acetylmannosamine (ManNAc) to ManNAc-6-P. The polypeptide is N-acetylmannosamine kinase (Escherichia coli O1:K1 / APEC).